The sequence spans 204 residues: 3-isopropylmalate dehydratase small subunit (204 aa).

It belongs to the LeuD family. LeuD type 1 subfamily. As to quaternary structure, heterodimer of LeuC and LeuD.

It carries out the reaction (2R,3S)-3-isopropylmalate = (2S)-2-isopropylmalate. It participates in amino-acid biosynthesis; L-leucine biosynthesis; L-leucine from 3-methyl-2-oxobutanoate: step 2/4. Its function is as follows. Catalyzes the isomerization between 2-isopropylmalate and 3-isopropylmalate, via the formation of 2-isopropylmaleate. The polypeptide is 3-isopropylmalate dehydratase small subunit (Vesicomyosocius okutanii subsp. Calyptogena okutanii (strain HA)).